The chain runs to 413 residues: Serine/threonine-protein phosphatase 2A 55 kDa regulatory subunit B beta isoform (413 aa).

4 WD repeats span residues glutamate 1 to valine 31, glutamate 57 to glutamate 98, alanine 141 to asparagine 179, and glutamate 190 to arginine 230. The residue at position 245 (serine 245) is a Phosphoserine. 3 WD repeats span residues glutamate 249–glutamate 287, glutamate 304–leucine 345, and aspartate 380–valine 412. At tyrosine 265 the chain carries Phosphotyrosine. The residue at position 268 (threonine 268) is a Phosphothreonine.

Belongs to the phosphatase 2A regulatory subunit B family. PP2A consists of a common heterodimeric core enzyme, composed of a 36 kDa catalytic subunit (subunit C) and a 65 kDa constant regulatory subunit (PR65 or subunit A), that associates with a variety of regulatory subunits. Proteins that associate with the core dimer include three families of regulatory subunits B (the R2/B/PR55/B55, R3/B''/PR72/PR130/PR59 and R5/B'/B56 families), the 48 kDa variable regulatory subunit, viral proteins, and cell signaling molecules. Interacts with TOMM22. Interacts with IER5 (via N- and C-terminal regions). In terms of tissue distribution, brain.

Its subcellular location is the cytoplasm. It localises to the cytoskeleton. The protein resides in the membrane. In terms of biological role, the B regulatory subunit might modulate substrate selectivity and catalytic activity, and might also direct the localization of the catalytic enzyme to a particular subcellular compartment. The polypeptide is Serine/threonine-protein phosphatase 2A 55 kDa regulatory subunit B beta isoform (PPP2R2B) (Oryctolagus cuniculus (Rabbit)).